Here is a 353-residue protein sequence, read N- to C-terminus: Phosphate acyltransferase (353 aa).

Belongs to the PlsX family. In terms of assembly, homodimer. Probably interacts with PlsY.

Its subcellular location is the cytoplasm. It carries out the reaction a fatty acyl-[ACP] + phosphate = an acyl phosphate + holo-[ACP]. It participates in lipid metabolism; phospholipid metabolism. Catalyzes the reversible formation of acyl-phosphate (acyl-PO(4)) from acyl-[acyl-carrier-protein] (acyl-ACP). This enzyme utilizes acyl-ACP as fatty acyl donor, but not acyl-CoA. This Afipia carboxidovorans (strain ATCC 49405 / DSM 1227 / KCTC 32145 / OM5) (Oligotropha carboxidovorans) protein is Phosphate acyltransferase.